Reading from the N-terminus, the 273-residue chain is Lactose transport system permease protein LacG (273 aa).

6 helical membrane passes run 15 to 35 (YSVL…MVIG), 77 to 97 (IALV…YGFE), 110 to 130 (VILL…FMLM), 134 to 154 (GLLN…FIIF), 182 to 204 (FFYI…VFML), and 240 to 260 (GTVM…FFAM). In terms of domain architecture, ABC transmembrane type-1 spans 71 to 260 (FWNSVKIALV…LPTLLVFFAM (190 aa)).

The protein belongs to the binding-protein-dependent transport system permease family. MalFG subfamily.

The protein resides in the cell inner membrane. In terms of biological role, part of the binding-protein-dependent transport system for lactose. Probably responsible for the translocation of the substrate across the membrane. In Rhizobium radiobacter (Agrobacterium tumefaciens), this protein is Lactose transport system permease protein LacG (lacG).